An 84-amino-acid polypeptide reads, in one-letter code: Cytochrome b559 subunit alpha (84 aa).

The helical transmembrane segment at 22 to 36 (IIHSITIPALFVAGW) threads the bilayer. Position 24 (H24) interacts with heme.

Belongs to the PsbE/PsbF family. Heterodimer of an alpha subunit and a beta subunit. PSII is composed of 1 copy each of membrane proteins PsbA, PsbB, PsbC, PsbD, PsbE, PsbF, PsbH, PsbI, PsbJ, PsbK, PsbL, PsbM, PsbT, PsbX, PsbY, PsbZ, Psb30/Ycf12, at least 3 peripheral proteins of the oxygen-evolving complex and a large number of cofactors. It forms dimeric complexes. Heme b serves as cofactor.

It localises to the plastid. The protein localises to the chloroplast thylakoid membrane. Its function is as follows. This b-type cytochrome is tightly associated with the reaction center of photosystem II (PSII). PSII is a light-driven water:plastoquinone oxidoreductase that uses light energy to abstract electrons from H(2)O, generating O(2) and a proton gradient subsequently used for ATP formation. It consists of a core antenna complex that captures photons, and an electron transfer chain that converts photonic excitation into a charge separation. The protein is Cytochrome b559 subunit alpha of Guillardia theta (Cryptophyte).